The chain runs to 397 residues: 1-deoxy-D-xylulose 5-phosphate reductoisomerase (397 aa).

NADPH contacts are provided by Thr-12, Gly-13, Ser-14, Ile-15, Gly-38, Lys-39, Asn-40, and Asn-126. Lys-127 contacts 1-deoxy-D-xylulose 5-phosphate. Glu-128 contributes to the NADPH binding site. Residue Asp-152 participates in Mn(2+) binding. 4 residues coordinate 1-deoxy-D-xylulose 5-phosphate: Ser-153, Glu-154, Ser-188, and His-211. Glu-154 contributes to the Mn(2+) binding site. Residue Gly-217 coordinates NADPH. 4 residues coordinate 1-deoxy-D-xylulose 5-phosphate: Ser-224, Asn-229, Lys-230, and Glu-233. A Mn(2+)-binding site is contributed by Glu-233.

The protein belongs to the DXR family. It depends on Mg(2+) as a cofactor. Mn(2+) serves as cofactor.

It catalyses the reaction 2-C-methyl-D-erythritol 4-phosphate + NADP(+) = 1-deoxy-D-xylulose 5-phosphate + NADPH + H(+). It functions in the pathway isoprenoid biosynthesis; isopentenyl diphosphate biosynthesis via DXP pathway; isopentenyl diphosphate from 1-deoxy-D-xylulose 5-phosphate: step 1/6. In terms of biological role, catalyzes the NADPH-dependent rearrangement and reduction of 1-deoxy-D-xylulose-5-phosphate (DXP) to 2-C-methyl-D-erythritol 4-phosphate (MEP). The sequence is that of 1-deoxy-D-xylulose 5-phosphate reductoisomerase from Haemophilus influenzae (strain 86-028NP).